Consider the following 220-residue polypeptide: ATP-dependent Clp protease proteolytic subunit (220 aa).

Serine 125 functions as the Nucleophile in the catalytic mechanism. Histidine 150 is a catalytic residue.

This sequence belongs to the peptidase S14 family. In terms of assembly, fourteen ClpP subunits assemble into 2 heptameric rings which stack back to back to give a disk-like structure with a central cavity, resembling the structure of eukaryotic proteasomes.

Its subcellular location is the cytoplasm. The catalysed reaction is Hydrolysis of proteins to small peptides in the presence of ATP and magnesium. alpha-casein is the usual test substrate. In the absence of ATP, only oligopeptides shorter than five residues are hydrolyzed (such as succinyl-Leu-Tyr-|-NHMec, and Leu-Tyr-Leu-|-Tyr-Trp, in which cleavage of the -Tyr-|-Leu- and -Tyr-|-Trp bonds also occurs).. Cleaves peptides in various proteins in a process that requires ATP hydrolysis. Has a chymotrypsin-like activity. Plays a major role in the degradation of misfolded proteins. This is ATP-dependent Clp protease proteolytic subunit from Bacteroides fragilis (strain YCH46).